A 364-amino-acid chain; its full sequence is Probable protein disulfide-isomerase A6 (364 aa).

The first 28 residues, 1-28 (MKMEMHQIWSRIALASFAFAILFVSVSA), serve as a signal peptide directing secretion. 2 consecutive Thioredoxin domains span residues 29 to 137 (DDVV…TEGG) and 139 to 256 (NVKI…EKSG). Catalysis depends on nucleophile residues C58, C61, C177, and C180. 2 disulfide bridges follow: C58-C61 and C177-C180.

Belongs to the protein disulfide isomerase family.

It localises to the endoplasmic reticulum lumen. It catalyses the reaction Catalyzes the rearrangement of -S-S- bonds in proteins.. This Medicago sativa (Alfalfa) protein is Probable protein disulfide-isomerase A6.